The sequence spans 85 residues: Large ribosomal subunit protein eL43 (85 aa).

The C4-type zinc finger occupies 38–59 (CPVCGRKAVRRISTGIWQCQKC).

This sequence belongs to the eukaryotic ribosomal protein eL43 family. The cofactor is Zn(2+).

The sequence is that of Large ribosomal subunit protein eL43 from Thermococcus sibiricus (strain DSM 12597 / MM 739).